The primary structure comprises 127 residues: uncharacterized protein (127 aa).

A run of 2 helical transmembrane segments spans residues 42–62 (LLIS…IAFI) and 78–98 (GLPI…YYFL).

It is found in the membrane. This is an uncharacterized protein from Schizosaccharomyces pombe (strain 972 / ATCC 24843) (Fission yeast).